A 379-amino-acid chain; its full sequence is Putative cysteine desulfurase IscS 1 (379 aa).

Pyridoxal 5'-phosphate contacts are provided by residues Gly-71–Thr-72, Asn-151, Gln-179, and Ser-199–His-201. Lys-202 is subject to N6-(pyridoxal phosphate)lysine. A pyridoxal 5'-phosphate-binding site is contributed by Thr-237. Residue Cys-325 is the Cysteine persulfide intermediate of the active site. Cys-325 lines the [2Fe-2S] cluster pocket.

This sequence belongs to the class-V pyridoxal-phosphate-dependent aminotransferase family. NifS/IscS subfamily. Requires pyridoxal 5'-phosphate as cofactor.

The catalysed reaction is (sulfur carrier)-H + L-cysteine = (sulfur carrier)-SH + L-alanine. Catalyzes the removal of elemental sulfur from cysteine to produce alanine. This Bacillus subtilis (strain 168) protein is Putative cysteine desulfurase IscS 1 (iscS1).